The primary structure comprises 446 residues: N-succinylarginine dihydrolase (446 aa).

Substrate contacts are provided by residues 19 to 28 (SGLSYGNVAS), asparagine 110, and 137 to 138 (HR). Residue glutamate 174 is part of the active site. Arginine 214 is a substrate binding site. Histidine 250 is an active-site residue. Aspartate 252 and asparagine 363 together coordinate substrate. Catalysis depends on cysteine 369, which acts as the Nucleophile.

This sequence belongs to the succinylarginine dihydrolase family. As to quaternary structure, homodimer.

It catalyses the reaction N(2)-succinyl-L-arginine + 2 H2O + 2 H(+) = N(2)-succinyl-L-ornithine + 2 NH4(+) + CO2. It functions in the pathway amino-acid degradation; L-arginine degradation via AST pathway; L-glutamate and succinate from L-arginine: step 2/5. In terms of biological role, catalyzes the hydrolysis of N(2)-succinylarginine into N(2)-succinylornithine, ammonia and CO(2). The polypeptide is N-succinylarginine dihydrolase (Hahella chejuensis (strain KCTC 2396)).